The sequence spans 346 residues: uncharacterized protein (346 aa).

Residues 10–109 are disordered; the sequence is WDFIMTDPSS…SNSNGNNSPV (100 aa). A compositionally biased stretch (low complexity) spans 26-44; it reads KGSSKNGSPKTSSPKSGSP. Residues 56-67 show a composition bias toward polar residues; the sequence is NQQLLQNDSINL. Positions 94-109 are enriched in low complexity; it reads KSSVVPSNSNGNNSPV.

This is an uncharacterized protein from Dictyostelium discoideum (Social amoeba).